We begin with the raw amino-acid sequence, 676 residues long: MLKPERMVRVSVVGPREKLGETADLLHRLNLVHIEEPEESEYFRIGEPHPDASVVSRALVQMRSFISHLKLDPSRIVPRRKFRESEIEAQLKEKLDEYQQLIGERIEYLRSVDEKIASLQEQLNQIEPLKRLGIPARLLKGYKTLRVFVGFVKENPTEKFAQVTSDFEVFATEYEKELVVAVFVKAEYGDEFLRILQECGYREIQVPDVEDFEAKISEIEKEIESLKSRKEQVEKEIEEVKVKEAETLLAIEEYLSSQMDKYELPLRTLVSKYSFVLVGYLPAKALNEFKAKMDANGVAVEVLDEEGEPPTKLSNPAGVRNFELLTTTFGIPKYKEIDPTVFIAIFFPIFFGMMLGDIGYGLLVTVISLYLKRVFKTEGWQRMLNIGVYAGVMSIIFGFIYGECFGPFIVPGEYEPYQIHFIGSQLEHLYEFHHGHPIFDRVEEMGVKILLFATIVIGIAKILFGFALGFYNVYVEHGLKDAILEKLSWIIGVLGLAMIIFGFAYNVGVFYQLGMGPNPGDVPPLPLPGLMEGWQAGLNVYYLAALPLLVVWFILFVMGEVPKMGAMGVILAVELLTWFGQIMSYARLLAIGLSSVYIAFVINFIGMKLIDPVGISIPIVGAIVLLIGHVGNLILGILDPGLQSLRLHYVEFFTKFFEGGGRLYEPFGRIKRFIEE.

The next 8 helical transmembrane spans lie at 341–361, 390–410, 449–469, 490–510, 538–558, 564–584, 590–610, and 617–637; these read VFIA…IGYG, AGVM…PFIV, ILLF…FALG, IIGV…VGVF, LNVY…LFVM, MGAM…QIMS, AIGL…MKLI, and IPIV…ILGI.

Belongs to the V-ATPase 116 kDa subunit family. Has multiple subunits with at least A(3), B(3), C, D, E, F, H, I and proteolipid K(x).

It is found in the cell membrane. Its function is as follows. Component of the A-type ATP synthase that produces ATP from ADP in the presence of a proton gradient across the membrane. This is A-type ATP synthase subunit I from Archaeoglobus fulgidus (strain ATCC 49558 / DSM 4304 / JCM 9628 / NBRC 100126 / VC-16).